The sequence spans 248 residues: Large ribosomal subunit protein uL10m (248 aa).

The N-terminal 24 residues, 1–24 (MATLIQRSLSLAKSSTPALQFLRF), are a transit peptide targeting the mitochondrion.

Belongs to the universal ribosomal protein uL10 family. Component of the mitochondrial ribosome large subunit (39S) which comprises a 16S rRNA and about 50 distinct proteins.

Its subcellular location is the mitochondrion. In Drosophila melanogaster (Fruit fly), this protein is Large ribosomal subunit protein uL10m (mRpL10).